A 525-amino-acid chain; its full sequence is GMP synthase [glutamine-hydrolyzing] (525 aa).

A Glutamine amidotransferase type-1 domain is found at 9 to 207 (RILILDFGSQ…VLDVCQCEAL (199 aa)). Catalysis depends on C86, which acts as the Nucleophile. Catalysis depends on residues H181 and E183. Residues 208 to 400 (WTPASIIEDT…LGLPYDMLNR (193 aa)) enclose the GMPS ATP-PPase domain. Position 235–241 (235–241 (SGGVDSS)) interacts with ATP.

As to quaternary structure, homodimer.

It catalyses the reaction XMP + L-glutamine + ATP + H2O = GMP + L-glutamate + AMP + diphosphate + 2 H(+). Its pathway is purine metabolism; GMP biosynthesis; GMP from XMP (L-Gln route): step 1/1. Functionally, catalyzes the synthesis of GMP from XMP. This chain is GMP synthase [glutamine-hydrolyzing], found in Photorhabdus laumondii subsp. laumondii (strain DSM 15139 / CIP 105565 / TT01) (Photorhabdus luminescens subsp. laumondii).